Reading from the N-terminus, the 239-residue chain is Orotidine 5'-phosphate decarboxylase (239 aa).

Substrate-binding positions include Asp-15, Lys-37, 64–73 (DLKYHDIPNT), Thr-126, Arg-187, Gln-196, Gly-216, and Arg-217. The active-site Proton donor is Lys-66.

This sequence belongs to the OMP decarboxylase family. Type 1 subfamily. As to quaternary structure, homodimer.

The enzyme catalyses orotidine 5'-phosphate + H(+) = UMP + CO2. Its pathway is pyrimidine metabolism; UMP biosynthesis via de novo pathway; UMP from orotate: step 2/2. In terms of biological role, catalyzes the decarboxylation of orotidine 5'-monophosphate (OMP) to uridine 5'-monophosphate (UMP). This chain is Orotidine 5'-phosphate decarboxylase, found in Geotalea daltonii (strain DSM 22248 / JCM 15807 / FRC-32) (Geobacter daltonii).